The following is a 94-amino-acid chain: Small ubiquitin-related modifier 3-like (94 aa).

Lys-11 is covalently cross-linked (Glycyl lysine isopeptide (Lys-Gly) (interchain with G-Cter in SUMO)). A Ubiquitin-like domain is found at 15–92; sequence DHINLKVAGQ…IDVFQQQTGG (78 aa). Gly-92 participates in a covalent cross-link: Glycyl lysine isopeptide (Gly-Lys) (interchain with K-? in acceptor proteins). Residues 93-94 constitute a propeptide that is removed on maturation; that stretch reads SC.

It belongs to the ubiquitin family. SUMO subfamily. In terms of assembly, interacts with sae2 and ube2i. Covalently attached to a number of proteins. In terms of processing, polymeric chains can be formed through Lys-11 cross-linking. Cleavage of precursor form by a sentrin-specific protease is necessary for function.

It is found in the cytoplasm. Its subcellular location is the nucleus. The protein resides in the PML body. Ubiquitin-like protein which can be covalently attached to target lysines either as a monomer or as a lysine-linked polymer. Does not seem to be involved in protein degradation and may function as an antagonist of ubiquitin in the degradation process. Plays a role in a number of cellular processes such as nuclear transport, DNA replication and repair, mitosis and signal transduction. Covalent attachment to its substrates requires prior activation by the E1 complex sae1-sae2 and linkage to the E2 enzyme ube2i. This Danio rerio (Zebrafish) protein is Small ubiquitin-related modifier 3-like (sumo3l).